Here is a 72-residue protein sequence, read N- to C-terminus: Translation initiation factor IF-1 (72 aa).

The region spanning 1–72 (MAKKDVIELE…TRGRITWRKK (72 aa)) is the S1-like domain.

The protein belongs to the IF-1 family. Component of the 30S ribosomal translation pre-initiation complex which assembles on the 30S ribosome in the order IF-2 and IF-3, IF-1 and N-formylmethionyl-tRNA(fMet); mRNA recruitment can occur at any time during PIC assembly.

Its subcellular location is the cytoplasm. One of the essential components for the initiation of protein synthesis. Stabilizes the binding of IF-2 and IF-3 on the 30S subunit to which N-formylmethionyl-tRNA(fMet) subsequently binds. Helps modulate mRNA selection, yielding the 30S pre-initiation complex (PIC). Upon addition of the 50S ribosomal subunit IF-1, IF-2 and IF-3 are released leaving the mature 70S translation initiation complex. This chain is Translation initiation factor IF-1, found in Clostridioides difficile (strain 630) (Peptoclostridium difficile).